A 252-amino-acid chain; its full sequence is Imidazole glycerol phosphate synthase subunit HisF (252 aa).

Catalysis depends on residues Asp-11 and Asp-130.

It belongs to the HisA/HisF family. As to quaternary structure, heterodimer of HisH and HisF.

The protein localises to the cytoplasm. The enzyme catalyses 5-[(5-phospho-1-deoxy-D-ribulos-1-ylimino)methylamino]-1-(5-phospho-beta-D-ribosyl)imidazole-4-carboxamide + L-glutamine = D-erythro-1-(imidazol-4-yl)glycerol 3-phosphate + 5-amino-1-(5-phospho-beta-D-ribosyl)imidazole-4-carboxamide + L-glutamate + H(+). It participates in amino-acid biosynthesis; L-histidine biosynthesis; L-histidine from 5-phospho-alpha-D-ribose 1-diphosphate: step 5/9. IGPS catalyzes the conversion of PRFAR and glutamine to IGP, AICAR and glutamate. The HisF subunit catalyzes the cyclization activity that produces IGP and AICAR from PRFAR using the ammonia provided by the HisH subunit. This chain is Imidazole glycerol phosphate synthase subunit HisF, found in Desulforudis audaxviator (strain MP104C).